Here is a 267-residue protein sequence, read N- to C-terminus: 5'-nucleotidase SurE (267 aa).

A divalent metal cation is bound by residues Asp-14, Asp-15, Ser-45, and Asn-100.

This sequence belongs to the SurE nucleotidase family. It depends on a divalent metal cation as a cofactor.

It localises to the cytoplasm. It catalyses the reaction a ribonucleoside 5'-phosphate + H2O = a ribonucleoside + phosphate. In terms of biological role, nucleotidase that shows phosphatase activity on nucleoside 5'-monophosphates. The sequence is that of 5'-nucleotidase SurE from Methanosarcina barkeri (strain Fusaro / DSM 804).